Consider the following 142-residue polypeptide: Hemoglobin subunit alpha-1 (142 aa).

The Globin domain maps to 2 to 142 (VLSAADKSNV…VSTVLTSKYR (141 aa)). His59 is a binding site for O2. His88 lines the heme b pocket.

Belongs to the globin family. Heterotetramer of two alpha chains and two beta chains.

Its function is as follows. Involved in oxygen transport from the lung to the various peripheral tissues. Hemopressin acts as an antagonist peptide of the cannabinoid receptor CNR1. Hemopressin-binding efficiently blocks cannabinoid receptor CNR1 and subsequent signaling. The polypeptide is Hemoglobin subunit alpha-1 (HBA1) (Capra hircus (Goat)).